Reading from the N-terminus, the 101-residue chain is Urease subunit gamma (101 aa).

This sequence belongs to the urease gamma subunit family. In terms of assembly, heterotrimer of UreA (gamma), UreB (beta) and UreC (alpha) subunits. Three heterotrimers associate to form the active enzyme.

It is found in the cytoplasm. It catalyses the reaction urea + 2 H2O + H(+) = hydrogencarbonate + 2 NH4(+). It participates in nitrogen metabolism; urea degradation; CO(2) and NH(3) from urea (urease route): step 1/1. The sequence is that of Urease subunit gamma from Ureaplasma parvum serovar 3 (strain ATCC 27815 / 27 / NCTC 11736).